Reading from the N-terminus, the 497-residue chain is Zinc finger protein 3 (497 aa).

Positions 1–20 are enriched in basic and acidic residues; it reads MGTEKKEGLPKEETSEDSKP. Residues 1 to 53 are disordered; it reads MGTEKKEGLPKEETSEDSKPHGQTVEKLAQEVCHGHEFGEASEEDMSEGHLRE. Glycyl lysine isopeptide (Lys-Gly) (interchain with G-Cter in SUMO2) cross-links involve residues Lys6 and Lys11. C2H2-type zinc fingers lie at residues 136–158, 164–186, 192–214, 220–242, 248–270, 276–298, 304–326, 332–354, 360–382, 388–410, 416–438, 444–466, and 472–494; these read HTCKECGKAFNQNSHLIQHMRVH, FECKECGKTFGTNSSLRRHQRIH, FACTECGKAFIQSSHLIHHHRIH, YKCEECGKAFSQNSALILHQRIH, YECNECGKTFRVSSQLIQHQRIH, HECSECGKAFKHSSGLIRHQKIH, YLCNECGKGFGQSSELIRHQRIH, YECSECGKTFGQNSEIIRHIRIH, YVCKECGKAFRGNSELLRHERIH, YECFECGKAFRRTSHLIVHQRIH, HQCNECARTFWDNSELLLHQKIH, YECSECEKTFSQHSQLTIHQRIH, and YECQECQKTFSRSSHLLRHQSVH.

Belongs to the krueppel C2H2-type zinc-finger protein family.

It localises to the nucleus. In terms of biological role, may be involved in transcriptional regulation. This Mus musculus (Mouse) protein is Zinc finger protein 3 (Zfp3).